We begin with the raw amino-acid sequence, 382 residues long: Toluene efflux pump periplasmic linker protein TtgD (382 aa).

Positions 1 to 23 are cleaved as a signal peptide; the sequence is MRLERALRARQLIPLAAIWLLVG. The N-palmitoyl cysteine moiety is linked to residue Cys24. Cys24 is lipidated: S-diacylglycerol cysteine. A coiled-coil region spans residues 100-136; it reads YEALLARAEASLLTAQNLARRYERLLDTNAISQQQYD.

It belongs to the membrane fusion protein (MFP) (TC 8.A.1) family.

It is found in the cell inner membrane. Its function is as follows. The periplasmic linker protein component of an inducible organic solvent efflux pump. Involved in export of toluene and styrene but not of m-xylene, propylbenzene or ethylbenzene. Is not involved in antibiotic or AMP efflux. This chain is Toluene efflux pump periplasmic linker protein TtgD (ttgD), found in Pseudomonas putida (strain DOT-T1E).